The chain runs to 518 residues: Light-independent protochlorophyllide reductase subunit B (518 aa).

Residue Asp36 participates in [4Fe-4S] cluster binding. Asp299 acts as the Proton donor in catalysis. 434 to 435 (GM) contributes to the substrate binding site.

The protein belongs to the ChlB/BchB/BchZ family. As to quaternary structure, protochlorophyllide reductase is composed of three subunits; ChlL, ChlN and ChlB. Forms a heterotetramer of two ChlB and two ChlN subunits. [4Fe-4S] cluster is required as a cofactor.

Its subcellular location is the plastid. It localises to the chloroplast. It catalyses the reaction chlorophyllide a + oxidized 2[4Fe-4S]-[ferredoxin] + 2 ADP + 2 phosphate = protochlorophyllide a + reduced 2[4Fe-4S]-[ferredoxin] + 2 ATP + 2 H2O. It participates in porphyrin-containing compound metabolism; chlorophyll biosynthesis (light-independent). Component of the dark-operative protochlorophyllide reductase (DPOR) that uses Mg-ATP and reduced ferredoxin to reduce ring D of protochlorophyllide (Pchlide) to form chlorophyllide a (Chlide). This reaction is light-independent. The NB-protein (ChlN-ChlB) is the catalytic component of the complex. In Adiantum capillus-veneris (Maidenhair fern), this protein is Light-independent protochlorophyllide reductase subunit B.